Consider the following 134-residue polypeptide: Retinoid-binding protein 7 (134 aa).

Belongs to the calycin superfamily. Fatty-acid binding protein (FABP) family. In terms of tissue distribution, expressed primarily in kidney, heart and transverse colon. Detected in adult lymph node, appendix, ascending colon, and in fetal heart and spleen.

It is found in the cytoplasm. In terms of biological role, intracellular transport of retinol. This Homo sapiens (Human) protein is Retinoid-binding protein 7 (RBP7).